We begin with the raw amino-acid sequence, 168 residues long: Crossover junction endodeoxyribonuclease RuvC (168 aa).

Catalysis depends on residues D7, E64, and D136. Positions 7, 64, and 136 each coordinate Mg(2+).

This sequence belongs to the RuvC family. Homodimer which binds Holliday junction (HJ) DNA. The HJ becomes 2-fold symmetrical on binding to RuvC with unstacked arms; it has a different conformation from HJ DNA in complex with RuvA. In the full resolvosome a probable DNA-RuvA(4)-RuvB(12)-RuvC(2) complex forms which resolves the HJ. Mg(2+) serves as cofactor.

Its subcellular location is the cytoplasm. The catalysed reaction is Endonucleolytic cleavage at a junction such as a reciprocal single-stranded crossover between two homologous DNA duplexes (Holliday junction).. Its function is as follows. The RuvA-RuvB-RuvC complex processes Holliday junction (HJ) DNA during genetic recombination and DNA repair. Endonuclease that resolves HJ intermediates. Cleaves cruciform DNA by making single-stranded nicks across the HJ at symmetrical positions within the homologous arms, yielding a 5'-phosphate and a 3'-hydroxyl group; requires a central core of homology in the junction. The consensus cleavage sequence is 5'-(A/T)TT(C/G)-3'. Cleavage occurs on the 3'-side of the TT dinucleotide at the point of strand exchange. HJ branch migration catalyzed by RuvA-RuvB allows RuvC to scan DNA until it finds its consensus sequence, where it cleaves and resolves the cruciform DNA. The chain is Crossover junction endodeoxyribonuclease RuvC from Polynucleobacter necessarius subsp. necessarius (strain STIR1).